A 338-amino-acid chain; its full sequence is Phosphoribosylformylglycinamidine cyclo-ligase (338 aa).

It belongs to the AIR synthase family.

Its subcellular location is the cytoplasm. It catalyses the reaction 2-formamido-N(1)-(5-O-phospho-beta-D-ribosyl)acetamidine + ATP = 5-amino-1-(5-phospho-beta-D-ribosyl)imidazole + ADP + phosphate + H(+). It functions in the pathway purine metabolism; IMP biosynthesis via de novo pathway; 5-amino-1-(5-phospho-D-ribosyl)imidazole from N(2)-formyl-N(1)-(5-phospho-D-ribosyl)glycinamide: step 2/2. The chain is Phosphoribosylformylglycinamidine cyclo-ligase from Lactococcus lactis subsp. lactis (strain IL1403) (Streptococcus lactis).